The primary structure comprises 760 residues: Xaa-Pro dipeptidyl-peptidase (760 aa).

Catalysis depends on charge relay system residues Ser-349, Asp-469, and His-499.

This sequence belongs to the peptidase S15 family. In terms of assembly, homodimer.

The protein resides in the cytoplasm. It carries out the reaction Hydrolyzes Xaa-Pro-|- bonds to release unblocked, N-terminal dipeptides from substrates including Ala-Pro-|-p-nitroanilide and (sequentially) Tyr-Pro-|-Phe-Pro-|-Gly-Pro-|-Ile.. Removes N-terminal dipeptides sequentially from polypeptides having unsubstituted N-termini provided that the penultimate residue is proline. The protein is Xaa-Pro dipeptidyl-peptidase of Streptococcus pyogenes serotype M1.